The following is a 24-amino-acid chain: Humanin-like 9 (24 aa).

It belongs to the humanin family. Highly expressed in the kidney, heart muscle and testis.

The protein localises to the secreted. Its subcellular location is the cytoplasm. Functionally, plays a role as a neuroprotective and antiapoptotic factor. The chain is Humanin-like 9 from Homo sapiens (Human).